A 259-amino-acid chain; its full sequence is 5'-nucleotidase SurE (259 aa).

Residues aspartate 8, aspartate 9, serine 39, and asparagine 96 each coordinate a divalent metal cation.

It belongs to the SurE nucleotidase family. Requires a divalent metal cation as cofactor.

The protein resides in the cytoplasm. The catalysed reaction is a ribonucleoside 5'-phosphate + H2O = a ribonucleoside + phosphate. In terms of biological role, nucleotidase that shows phosphatase activity on nucleoside 5'-monophosphates. The polypeptide is 5'-nucleotidase SurE (Pelotomaculum thermopropionicum (strain DSM 13744 / JCM 10971 / SI)).